The primary structure comprises 95 residues: Acylphosphatase (95 aa).

Positions R8–R95 constitute an Acylphosphatase-like domain. Residues R23 and N41 contribute to the active site.

The protein belongs to the acylphosphatase family.

It carries out the reaction an acyl phosphate + H2O = a carboxylate + phosphate + H(+). This chain is Acylphosphatase (acyP), found in Salinibacter ruber (strain DSM 13855 / M31).